The primary structure comprises 85 residues: MNTASDQTHAISVNQLRSFIERIERLEEEKKAIADDIKDVYTELKGSGFDSKAVRKIVGLRKQEDHKRMEEEAVIQLYKNALGMT.

It belongs to the UPF0335 family.

The polypeptide is UPF0335 protein BARBAKC583_0130 (Bartonella bacilliformis (strain ATCC 35685 / KC583 / Herrer 020/F12,63)).